The sequence spans 131 residues: Proteinase inhibitor (131 aa).

An N-terminal signal peptide occupies residues 1-26 (MSASAKLSRMVCLLCGFFSTGISMAS). Cysteines 51 and 74 form a disulfide.

The protein belongs to the protease inhibitor I38 family.

The protein localises to the periplasm. Inhibitor of the alkaline protease. It forms a non-covalent bond with the protease and may prevent its autocatalytic cleavage in the periplasm. In Pseudomonas aeruginosa (strain ATCC 15692 / DSM 22644 / CIP 104116 / JCM 14847 / LMG 12228 / 1C / PRS 101 / PAO1), this protein is Proteinase inhibitor (inh).